A 76-amino-acid polypeptide reads, in one-letter code: Small ribosomal subunit protein bS18 (76 aa).

This sequence belongs to the bacterial ribosomal protein bS18 family. As to quaternary structure, part of the 30S ribosomal subunit. Forms a tight heterodimer with protein bS6.

Its function is as follows. Binds as a heterodimer with protein bS6 to the central domain of the 16S rRNA, where it helps stabilize the platform of the 30S subunit. This chain is Small ribosomal subunit protein bS18, found in Alcanivorax borkumensis (strain ATCC 700651 / DSM 11573 / NCIMB 13689 / SK2).